Reading from the N-terminus, the 383-residue chain is MNHSKTLLLTAAAGLMLTCGAVSSQAKHKLSDPYHFTVNAAAETEPVDTAGDAADDPAIWLDPKNPQNSKLITTNKKSGLAVYSLEGKMLHSYHTGKLNNVDIRYDFPLNGKKVDIAAASNRSEGKNTIEIYAIDGKNGTLQSITDPNRPIASAIDEVYGFSLYHSQKTGKYYAMVTGKEGEFEQYELNADKNGYISGKKVRAFKMNSQTEGMAADDEYGSLYIAEEDEAIWKFSAEPDGGSNGTVIDRADGRHLTPDIEGLTIYYAADGKGYLLASSQGNSSYAIYERQGQNKYVADFQITDGPETDGTSDTDGIDVLGFGLGPEYPFGLFVAQDGENIDHGQKANQNFKMVPWERIADKIGFHPQVNKQVDPRKMTDRSGK.

Positions 1–26 are cleaved as a signal peptide; it reads MNHSKTLLLTAAAGLMLTCGAVSSQA. The propeptide occupies 27-30; the sequence is KHKL. In terms of domain architecture, BPP spans 31–362; that stretch reads SDPYHFTVNA…VPWERIADKI (332 aa). The tract at residues 364 to 383 is disordered; the sequence is FHPQVNKQVDPRKMTDRSGK. Positions 372–383 are enriched in basic and acidic residues; sequence VDPRKMTDRSGK.

The protein localises to the secreted. It carries out the reaction 1D-myo-inositol hexakisphosphate + H2O = 1D-myo-inositol 1,2,4,5,6-pentakisphosphate + phosphate. This Bacillus sp. (strain DS11) protein is 3-phytase (phy).